The chain runs to 103 residues: MDRVMKLASERAVVIFTLSSCCMCHTVTRLFCDLGVNALVHELDQDPRGKEMERALLKLLGRGPPVPVVFIGGKLVGGTNKIMSLHLGGELIPMLKNAGALWL.

The 102-residue stretch at 1–102 (MDRVMKLASE…PMLKNAGALW (102 aa)) folds into the Glutaredoxin domain. Cysteines 21 and 24 form a disulfide. The short motif at 100 to 103 (ALWL) is the Responsive for interaction with TGA factors element.

This sequence belongs to the glutaredoxin family. CC-type subfamily.

The protein localises to the cytoplasm. It is found in the nucleus. In terms of biological role, has a glutathione-disulfide oxidoreductase activity in the presence of NADPH and glutathione reductase. Reduces low molecular weight disulfides and proteins. The protein is Putative glutaredoxin-C14 (GRXC14) of Oryza sativa subsp. japonica (Rice).